Consider the following 601-residue polypeptide: Elongation factor 4 (601 aa).

The region spanning 6 to 188 (SRTRNFSIIA…DIVKNVPPPK (183 aa)) is the tr-type G domain. GTP-binding positions include 18 to 23 (DHGKST) and 135 to 138 (NKID).

The protein belongs to the TRAFAC class translation factor GTPase superfamily. Classic translation factor GTPase family. LepA subfamily.

Its subcellular location is the cell membrane. The catalysed reaction is GTP + H2O = GDP + phosphate + H(+). Functionally, required for accurate and efficient protein synthesis under certain stress conditions. May act as a fidelity factor of the translation reaction, by catalyzing a one-codon backward translocation of tRNAs on improperly translocated ribosomes. Back-translocation proceeds from a post-translocation (POST) complex to a pre-translocation (PRE) complex, thus giving elongation factor G a second chance to translocate the tRNAs correctly. Binds to ribosomes in a GTP-dependent manner. The protein is Elongation factor 4 of Clostridioides difficile (strain 630) (Peptoclostridium difficile).